The primary structure comprises 88 residues: Apolipoprotein C-I (88 aa).

An N-terminal signal peptide occupies residues 1 to 26 (MRLFLSLPVLVVVLAMVLEGPAPAQA).

Belongs to the apolipoprotein C1 family.

The protein resides in the secreted. Inhibitor of lipoprotein binding to the low density lipoprotein (LDL) receptor, LDL receptor-related protein, and very low density lipoprotein (VLDL) receptor. Associates with high density lipoproteins (HDL) and the triacylglycerol-rich lipoproteins in the plasma and makes up about 10% of the protein of the VLDL and 2% of that of HDL. Appears to interfere directly with fatty acid uptake and is also the major plasma inhibitor of cholesteryl ester transfer protein (CETP). Binds free fatty acids and reduces their intracellular esterification. Modulates the interaction of APOE with beta-migrating VLDL and inhibits binding of beta-VLDL to the LDL receptor-related protein. This chain is Apolipoprotein C-I (APOC1), found in Arctocephalus gazella (Antarctic fur seal).